Consider the following 859-residue polypeptide: Cadherin-related family member 1 (859 aa).

The first 19 residues, 1–19 (MRRCRWAALALGLLRLCLA), serve as a signal peptide directing secretion. At 20–700 (QANFAPHFFD…LIQTKDNPMK (681 aa)) the chain is on the extracellular side. Cadherin domains are found at residues 36-135 (NGNM…APRF), 136-246 (IQEP…APVF), 247-353 (VGTP…PPTF), 359-472 (PQNR…VPKF), 473-576 (DSLY…PPQF), and 573-688 (PPQF…SPMA). Asn58 and Asn89 each carry an N-linked (GlcNAc...) asparagine glycan. Asn296 is a glycosylation site (N-linked (GlcNAc...) asparagine). A helical membrane pass occupies residues 701-721 (AVGVLAGTMATVVAITVLIST). Over 722 to 859 (ATFWRNKKSN…KKSVHNKAYF (138 aa)) the chain is Cytoplasmic. The segment at 770–838 (KEKPPNENCN…PKTMGSPVQS (69 aa)) is disordered. Positions 775 to 791 (NENCNNNSPESSLLPRA) are enriched in low complexity.

Interacts with PROM1. In terms of processing, undergoes proteolytic cleavage; produces a soluble 95 kDa N-terminal fragment and a 25 kDa cell-associated C-terminal fragment.

It localises to the cell membrane. Functionally, potential calcium-dependent cell-adhesion protein. May be required for the structural integrity of the outer segment (OS) of photoreceptor cells. This Homo sapiens (Human) protein is Cadherin-related family member 1.